We begin with the raw amino-acid sequence, 102 residues long: Small ribosomal subunit protein bS6 (102 aa).

This sequence belongs to the bacterial ribosomal protein bS6 family.

In terms of biological role, binds together with bS18 to 16S ribosomal RNA. In Desulfovibrio desulfuricans (strain ATCC 27774 / DSM 6949 / MB), this protein is Small ribosomal subunit protein bS6.